The primary structure comprises 566 residues: CTP synthase (566 aa).

The interval 1 to 265 (MTKYVFVTGG…DEIVCHKLNL (265 aa)) is amidoligase domain. Serine 13 lines the CTP pocket. Serine 13 contributes to the UTP binding site. ATP contacts are provided by residues 14-19 (SLGKGI) and aspartate 71. 2 residues coordinate Mg(2+): aspartate 71 and glutamate 139. CTP contacts are provided by residues 146–148 (DIE), 186–191 (KTKPTQ), and lysine 222. UTP-binding positions include 186–191 (KTKPTQ) and lysine 222. The Glutamine amidotransferase type-1 domain occupies 290–543 (EIALVGKYVD…IEAAAVFADK (254 aa)). Residue glycine 351 participates in L-glutamine binding. Cysteine 378 serves as the catalytic Nucleophile; for glutamine hydrolysis. L-glutamine contacts are provided by residues 379-382 (LGMQ), glutamate 402, and arginine 469. Residues histidine 516 and glutamate 518 contribute to the active site. The disordered stretch occupies residues 545-566 (PSSEGAISADKPERTTTGAYIQ).

It belongs to the CTP synthase family. Homotetramer.

The catalysed reaction is UTP + L-glutamine + ATP + H2O = CTP + L-glutamate + ADP + phosphate + 2 H(+). It catalyses the reaction L-glutamine + H2O = L-glutamate + NH4(+). It carries out the reaction UTP + NH4(+) + ATP = CTP + ADP + phosphate + 2 H(+). It participates in pyrimidine metabolism; CTP biosynthesis via de novo pathway; CTP from UDP: step 2/2. Its activity is regulated as follows. Allosterically activated by GTP, when glutamine is the substrate; GTP has no effect on the reaction when ammonia is the substrate. The allosteric effector GTP functions by stabilizing the protein conformation that binds the tetrahedral intermediate(s) formed during glutamine hydrolysis. Inhibited by the product CTP, via allosteric rather than competitive inhibition. Catalyzes the ATP-dependent amination of UTP to CTP with either L-glutamine or ammonia as the source of nitrogen. Regulates intracellular CTP levels through interactions with the four ribonucleotide triphosphates. The polypeptide is CTP synthase (Nitrosospira multiformis (strain ATCC 25196 / NCIMB 11849 / C 71)).